Reading from the N-terminus, the 471-residue chain is MENFKHLPEPFRIRVIEPVKRTTRAYREEAIIKSGMNPFLLDSEDVFIDLLTDSGTGAVTQSMQAAMMRGDEAYSGSRSYYALAESVKNIFGYQYTIPTHQGRGAEQIYIPVLIKKREQEKGLDRSKMVAFSNYFFDTTQGHSQINGCTVRNVYIKEAFDTGVRYDFKGNFDLEGLERGIEEVGPNNVPYIVATITSNSAGGQPVSLANLKAMYSIAKKYDIPVVMDSARFAENAYFIKQREAEYKDWTIEQITRETYKYADMLAMSAKKDAMVPMGGLLCMKDDSFFDVYTECRTLCVVQEGFPTYGGLEGGAMERLAVGLYDGMNLDWLAYRIAQVQYLVDGLEEIGVVCQQAGGHAAFVDAGKLLPHIPADQFPAQALACELYKVAGIRAVEIGSFLLGRDPKTGKQLPCPAELLRLTIPRATYTQTHMDFIIEAFKHVKENAANIKGLTFTYEPKVLRHFTAKLKEV.

N6-acetyllysine is present on residues Lys5, Lys115, and Lys156. Lys270 is subject to N6-(pyridoxal phosphate)lysine. Residue Lys450 is modified to N6-acetyllysine.

The protein belongs to the beta-eliminating lyase family. Homotetramer. Pyridoxal 5'-phosphate serves as cofactor.

It carries out the reaction L-tryptophan + H2O = indole + pyruvate + NH4(+). The protein operates within amino-acid degradation; L-tryptophan degradation via pyruvate pathway; indole and pyruvate from L-tryptophan: step 1/1. In Escherichia coli O139:H28 (strain E24377A / ETEC), this protein is Tryptophanase.